Here is a 246-residue protein sequence, read N- to C-terminus: Large ribosomal subunit protein uL2 (246 aa).

The disordered stretch occupies residues 196 to 226; the sequence is MSPYAHPHGGGSHQKGGTPVPKTAPPGQKVG.

This sequence belongs to the universal ribosomal protein uL2 family. As to quaternary structure, part of the 50S ribosomal subunit. Forms a bridge to the 30S subunit in the 70S ribosome.

In terms of biological role, one of the primary rRNA binding proteins. Required for association of the 30S and 50S subunits to form the 70S ribosome, for tRNA binding and peptide bond formation. It has been suggested to have peptidyltransferase activity; this is somewhat controversial. Makes several contacts with the 16S rRNA in the 70S ribosome. This is Large ribosomal subunit protein uL2 from Pyrobaculum arsenaticum (strain DSM 13514 / JCM 11321 / PZ6).